We begin with the raw amino-acid sequence, 224 residues long: Large ribosomal subunit protein uL1 (224 aa).

This sequence belongs to the universal ribosomal protein uL1 family. In terms of assembly, part of the 50S ribosomal subunit.

Binds directly to 23S rRNA. The L1 stalk is quite mobile in the ribosome, and is involved in E site tRNA release. Its function is as follows. Protein L1 is also a translational repressor protein, it controls the translation of the L11 operon by binding to its mRNA. The chain is Large ribosomal subunit protein uL1 from Borrelia duttonii (strain Ly).